Reading from the N-terminus, the 177-residue chain is Phycoerythrin beta subunit (177 aa).

(2R,3E)-phycocyanobilin-binding residues include Y18, K28, N35, and D39. 15,16-dihydrobiliverdin-binding residues include C50, D54, and C61. The (2R,3E)-phycocyanobilin site is built by R77, C82, R84, and D85. Residues R129, Q148, and K149 each contribute to the 15,16-dihydrobiliverdin site. Positions 154, 156, and 158 each coordinate (2R,3E)-phycocyanobilin.

Belongs to the phycobiliprotein family. Heterotetramer of 2 identical alpha chains and 2 identical beta chains which form 2 alpha-beta heterodimers within the heterotetramer. The two alpha-beta heterodimers are rotated to an open configuration in contrast to the closed configuration found in other cryptophyte species due to the insertion of a single amino acid, 'Asp-65', in a conserved region of the alpha chain. In the open form, the central chromophores are not in physical contact but are separated by a water-filled channel. Contains three phycocyanobilin chromophores and one 15,16-dihydrobiliverdin chromophore with binding of the phycocyanobilin chromophores mediated by both the alpha and beta subunits.

It is found in the plastid. It localises to the chloroplast thylakoid membrane. In terms of biological role, light-harvesting photosynthetic bile pigment-protein from the phycobiliprotein complex. The protein is Phycoerythrin beta subunit of Hemiselmis virescens.